The primary structure comprises 316 residues: Beta-ketoacyl-[acyl-carrier-protein] synthase III (316 aa).

Catalysis depends on residues Cys112 and His243. Residues Gln244–Arg248 form an ACP-binding region. Asn273 is a catalytic residue.

It belongs to the thiolase-like superfamily. FabH family. In terms of assembly, homodimer.

The protein resides in the cytoplasm. It catalyses the reaction malonyl-[ACP] + acetyl-CoA + H(+) = 3-oxobutanoyl-[ACP] + CO2 + CoA. Its pathway is lipid metabolism; fatty acid biosynthesis. Catalyzes the condensation reaction of fatty acid synthesis by the addition to an acyl acceptor of two carbons from malonyl-ACP. Catalyzes the first condensation reaction which initiates fatty acid synthesis and may therefore play a role in governing the total rate of fatty acid production. Possesses both acetoacetyl-ACP synthase and acetyl transacylase activities. Its substrate specificity determines the biosynthesis of branched-chain and/or straight-chain of fatty acids. The sequence is that of Beta-ketoacyl-[acyl-carrier-protein] synthase III from Haemophilus influenzae (strain 86-028NP).